Reading from the N-terminus, the 715-residue chain is Methionine--tRNA ligase (715 aa).

The 'HIGH' region motif lies at 17 to 27 (PYANGPIHLGH). Positions 148, 151, 161, and 164 each coordinate Zn(2+). The 'KMSKS' region signature appears at 359-363 (KMSKS). Lysine 362 lines the ATP pocket. A tRNA-binding domain is found at 614-715 (DLSKVELRVG…KDAKPGDRLK (102 aa)).

It belongs to the class-I aminoacyl-tRNA synthetase family. MetG type 1 subfamily. Homodimer. Zn(2+) is required as a cofactor.

The protein resides in the cytoplasm. It carries out the reaction tRNA(Met) + L-methionine + ATP = L-methionyl-tRNA(Met) + AMP + diphosphate. Its function is as follows. Is required not only for elongation of protein synthesis but also for the initiation of all mRNA translation through initiator tRNA(fMet) aminoacylation. This is Methionine--tRNA ligase from Leptospira interrogans serogroup Icterohaemorrhagiae serovar copenhageni (strain Fiocruz L1-130).